The chain runs to 589 residues: Vomeromodulin (589 aa).

The signal sequence occupies residues Met-1–Ser-29. Disordered regions lie at residues Gly-49–Gly-71 and Leu-146–Gln-170. N-linked (GlcNAc...) asparagine glycosylation is found at Asn-419 and Asn-437.

N-glycosylated. The N-glycans consist mainly of complex sialylated and fucosylated biantennary structures. In terms of tissue distribution, abundant in the lateral nasal glands. Also present in the posterior septal and vomeronasal glands.

The protein resides in the secreted. This Rattus norvegicus (Rat) protein is Vomeromodulin.